Here is a 150-residue protein sequence, read N- to C-terminus: UPF0260 protein PputGB1_4117 (150 aa).

The protein belongs to the UPF0260 family.

The polypeptide is UPF0260 protein PputGB1_4117 (Pseudomonas putida (strain GB-1)).